The following is a 182-amino-acid chain: Protein LURP-one-related 7 (182 aa).

Belongs to the LOR family.

In terms of biological role, might be related to the phospholipid scramblase and tubby-like superfamily of membrane tethered transcription factors. The polypeptide is Protein LURP-one-related 7 (Arabidopsis thaliana (Mouse-ear cress)).